The primary structure comprises 467 residues: UDP-N-acetylmuramate--L-alanine ligase (467 aa).

Residue 121 to 127 (GSHGKTT) coordinates ATP.

The protein belongs to the MurCDEF family.

Its subcellular location is the cytoplasm. It carries out the reaction UDP-N-acetyl-alpha-D-muramate + L-alanine + ATP = UDP-N-acetyl-alpha-D-muramoyl-L-alanine + ADP + phosphate + H(+). It participates in cell wall biogenesis; peptidoglycan biosynthesis. In terms of biological role, cell wall formation. The protein is UDP-N-acetylmuramate--L-alanine ligase of Parasynechococcus marenigrum (strain WH8102).